The chain runs to 181 residues: Large ribosomal subunit protein bL19 (181 aa).

A compositionally biased stretch (basic and acidic residues) spans 162–173 (EKKAAAEAEAAK). Residues 162–181 (EKKAAAEAEAAKAAEATPAE) are disordered.

Belongs to the bacterial ribosomal protein bL19 family.

In terms of biological role, this protein is located at the 30S-50S ribosomal subunit interface and may play a role in the structure and function of the aminoacyl-tRNA binding site. This chain is Large ribosomal subunit protein bL19, found in Mesorhizobium japonicum (strain LMG 29417 / CECT 9101 / MAFF 303099) (Mesorhizobium loti (strain MAFF 303099)).